The sequence spans 459 residues: tRNA modification GTPase MnmE (459 aa).

The (6S)-5-formyl-5,6,7,8-tetrahydrofolate site is built by R23, E86, and R125. Residues G221–Y380 form the TrmE-type G domain. N231 lines the K(+) pocket. Residues N231 to S236, T250 to T256, and D275 to G278 contribute to the GTP site. Position 235 (S235) interacts with Mg(2+). K(+) contacts are provided by T250, I252, and T255. Residue T256 coordinates Mg(2+). Residue K459 participates in (6S)-5-formyl-5,6,7,8-tetrahydrofolate binding.

The protein belongs to the TRAFAC class TrmE-Era-EngA-EngB-Septin-like GTPase superfamily. TrmE GTPase family. In terms of assembly, homodimer. Heterotetramer of two MnmE and two MnmG subunits. Requires K(+) as cofactor.

Its subcellular location is the cytoplasm. Exhibits a very high intrinsic GTPase hydrolysis rate. Involved in the addition of a carboxymethylaminomethyl (cmnm) group at the wobble position (U34) of certain tRNAs, forming tRNA-cmnm(5)s(2)U34. The chain is tRNA modification GTPase MnmE from Clostridioides difficile (strain 630) (Peptoclostridium difficile).